A 1011-amino-acid chain; its full sequence is Protein translocase subunit SecA, chloroplastic (1011 aa).

Positions 1–17 (MATSSLCSSFTSQTCNP) are enriched in polar residues. Positions 1–22 (MATSSLCSSFTSQTCNPHSRPH) are disordered. Residues 1 to 59 (MATSSLCSSFTSQTCNPHSRPHRKTLTLPGSVFLCRQFHLNSPSVSKTRRIRTRQSGPV) constitute a chloroplast transit peptide. 164–171 (MRTGEGKT) lines the ATP pocket. The interval 976–1011 (QDKMENQKSGKRNARPPTDTNPDPVGTVEPSTSASS) is disordered.

This sequence belongs to the SecA family.

The protein resides in the plastid. It localises to the chloroplast stroma. It is found in the chloroplast thylakoid membrane. The enzyme catalyses ATP + H2O + chloroplast-proteinSide 1 = ADP + phosphate + chloroplast-proteinSide 2.. Has a central role in coupling the hydrolysis of ATP to the transfer of proteins across the thylakoid membrane. Facilitates the transport of precursor proteins from the chloroplast stroma to thylakoid lumen. This Pisum sativum (Garden pea) protein is Protein translocase subunit SecA, chloroplastic.